Reading from the N-terminus, the 79-residue chain is uncharacterized protein (79 aa).

A disordered region spans residues 51-79; that stretch reads PAQFPKVQRPPTLLGGKNTSTQTTLHPVI. The span at 67 to 79 shows a compositional bias: polar residues; it reads KNTSTQTTLHPVI.

This is an uncharacterized protein from Homo sapiens (Human).